Consider the following 95-residue polypeptide: uncharacterized protein (95 aa).

This is an uncharacterized protein from Bacillus subtilis (strain 168).